The following is a 192-amino-acid chain: Probable thymidylate kinase (192 aa).

Position 7 to 14 (7 to 14) interacts with ATP; sequence GIDGAGKS.

Belongs to the thymidylate kinase family.

The enzyme catalyses dTMP + ATP = dTDP + ADP. The polypeptide is Probable thymidylate kinase (Methanobrevibacter smithii (strain ATCC 35061 / DSM 861 / OCM 144 / PS)).